The primary structure comprises 572 residues: Putative acyl-CoA synthetase CCNA_01223 (572 aa).

It belongs to the ATP-dependent AMP-binding enzyme family.

It functions in the pathway lipid metabolism; sphingolipid metabolism. Functionally, involved in de novo bacterial ceramide synthesis. The protein is Putative acyl-CoA synthetase CCNA_01223 of Caulobacter vibrioides (strain NA1000 / CB15N) (Caulobacter crescentus).